The sequence spans 1482 residues: Glutamate receptor ionotropic, NMDA 2B (1482 aa).

The N-terminal stretch at 1–26 is a signal peptide; it reads MKPSAECCSPKFWLVLAVLAVSGSKA. Over 27–557 the chain is Extracellular; it reads RSQKSAPSIG…SAFLEPFSAD (531 aa). Asparagine 74 is a glycosylation site (N-linked (GlcNAc...) asparagine). Residues cysteine 86 and cysteine 321 are joined by a disulfide bond. The Zn(2+) site is built by histidine 127 and glutamate 284. 4 N-linked (GlcNAc...) asparagine glycosylation sites follow: asparagine 341, asparagine 348, asparagine 444, and asparagine 491. Cystine bridges form between cysteine 429–cysteine 456 and cysteine 436–cysteine 457. Threonine 514 and arginine 519 together coordinate L-glutamate. Asparagine 542 is a glycosylation site (N-linked (GlcNAc...) asparagine). A helical membrane pass occupies residues 558–576; the sequence is VWVMMFVMLLIVSAVAVFV. Residues 577-603 are Cytoplasmic-facing; the sequence is FEYFSPVGYNRCLADGREPGGPSFTIG. The segment at residues 604–623 is an intramembrane region (discontinuously helical); the sequence is KAIWLLWGLVFNNSVPVQNP. The tract at residues 604–623 is pore-forming; sequence KAIWLLWGLVFNNSVPVQNP. Residues 624 to 630 are Cytoplasmic-facing; the sequence is KGTTSKI. Residues 631–646 traverse the membrane as a helical segment; it reads MVSVWAFFAVIFLASY. The Extracellular portion of the chain corresponds to 647–817; it reads TANLAAFMIQ…VMSSQLDIDN (171 aa). N-linked (GlcNAc...) asparagine glycosylation is present at asparagine 688. Residues 690-691 and aspartate 732 each bind L-glutamate; that span reads ST. An intrachain disulfide couples cysteine 746 to cysteine 801. A helical membrane pass occupies residues 818–837; sequence MAGVFYMLGAAMALSLITFI. Over 838–1482 the chain is Cytoplasmic; it reads CEHLFYWQFR…EKLSSIESDV (645 aa). Residues serine 882, serine 886, serine 917, and serine 920 each carry the phosphoserine modification. 2 positions are modified to phosphotyrosine: tyrosine 962 and tyrosine 1039. Serine 1058, serine 1061, and serine 1064 each carry phosphoserine. A disordered region spans residues 1074–1097; sequence EGNAAKRRKQQYKDSLKKRPASAK. Phosphotyrosine is present on residues tyrosine 1109 and tyrosine 1133. Serine 1143 carries the phosphoserine modification. A Phosphotyrosine modification is found at tyrosine 1155. The segment at 1162–1194 is disordered; sequence FKRDSVSGGGPCTNRSHLKHGTGDKHGVVGGVP. 2 positions are modified to phosphoserine: serine 1255 and serine 1259. Residues 1266-1277 are compositionally biased toward low complexity; that stretch reads PAAPVAVSSNAS. The segment at 1266 to 1301 is disordered; it reads PAAPVAVSSNASTTKYPQSPTNSKAQKKNRNKLRRQ. A compositionally biased stretch (polar residues) spans 1278-1289; that stretch reads TTKYPQSPTNSK. Residues 1290–1301 are compositionally biased toward basic residues; it reads AQKKNRNKLRRQ. The tract at residues 1292–1304 is interaction with DAPK1; the sequence is KKNRNKLRRQHSY. Position 1303 is a phosphoserine; by DAPK1 (serine 1303). Tyrosine 1472 is modified (phosphotyrosine). Residues 1480–1482 carry the PDZ-binding motif; it reads SDV.

It belongs to the glutamate-gated ion channel (TC 1.A.10.1) family. NR2B/GRIN2B subfamily. Heterotetramer. Forms heterotetrameric channels composed of two GluN1/zeta subunits (GRIN1), and two identical GluN2/epsilon subunits (GRIN2A, GRIN2B, GRIN2C or GRIN2D) or GluN3 subunits (GRIN3A or GRIN3B) (in vitro). Can also form heterotetrameric channels that contain at least two GluN1 subunits and at least two different GluN2 subunits (or a combination of one GluN2 and one GluN3 subunits) (in vitro). In vivo, the subunit composition may depend on the expression levels of the different subunits. Found in a complex with GRIN1, GRIN3A and PPP2CB. Interacts with MAGI3. Interacts with HIP1 and NETO1. Interacts with PDZ domains of PATJ, DLG3 and DLG4. Interacts with DAPK1. Found in a complex with GRIN1 and PRR7. Interacts with PRR7. Interacts with CAMK2A. Interacts with ARC; preventing ARC oligomerization. Interacts with TMEM25. Interacts (via the extreme C-terminus) with FRMPD2 (via the second PDZ domain); the interaction is direct and is likely to promote NMDAR-mediated neural signal transmission. GRIN2A binds FRMPD2 with lower affinity than GRIN2B. Interacts with FAM81A; the interaction facilitates condensate formation via liquid-liquid phase separation. In terms of processing, phosphorylated on tyrosine residues. Phosphorylation at Ser-1303 by DAPK1 enhances synaptic NMDA receptor channel activity. As to expression, detected in brain (at protein level). Detected throughout the brain, and in brain stem trigeminal nucleus. Detected in forebrain.

It is found in the cell membrane. The protein localises to the postsynaptic cell membrane. The protein resides in the cell projection. It localises to the dendrite. Its subcellular location is the late endosome. It is found in the lysosome. The protein localises to the cytoplasm. The protein resides in the cytoskeleton. The enzyme catalyses Ca(2+)(in) = Ca(2+)(out). It carries out the reaction Na(+)(in) = Na(+)(out). The catalysed reaction is K(+)(in) = K(+)(out). In terms of biological role, component of N-methyl-D-aspartate (NMDA) receptors (NMDARs) that function as heterotetrameric, ligand-gated cation channels with high calcium permeability and voltage-dependent block by Mg(2+). Participates in synaptic plasticity for learning and memory formation by contributing to the long-term depression (LTD) of hippocampus membrane currents. Channel activation requires binding of the neurotransmitter L-glutamate to the GluN2 subunit, glycine or D-serine binding to the GluN1 subunit, plus membrane depolarization to eliminate channel inhibition by Mg(2+). NMDARs mediate simultaneously the potasium efflux and the influx of calcium and sodium. Each GluN2 subunit confers differential attributes to channel properties, including activation, deactivation and desensitization kinetics, pH sensitivity, Ca2(+) permeability, and binding to allosteric modulators. In concert with DAPK1 at extrasynaptic sites, acts as a central mediator for stroke damage. Its phosphorylation at Ser-1303 by DAPK1 enhances synaptic NMDA receptor channel activity inducing injurious Ca2+ influx through them, resulting in an irreversible neuronal death. This is Glutamate receptor ionotropic, NMDA 2B from Mus musculus (Mouse).